The following is an 863-amino-acid chain: Linoleate 9S-lipoxygenase 1 (863 aa).

The 127-residue stretch at 32–158 (RDFTASLLDN…KYHYNRIFFA (127 aa)) folds into the PLAT domain. In terms of domain architecture, Lipoxygenase spans 161–863 (SYLPSQMPEA…ARGIPNSISI (703 aa)). Positions 204–244 (NDLGEPDRDNPRPVLGGSQKHPYPRRGRTGRIPTKKDPNSE) are disordered. H518, H523, H709, N713, and I863 together coordinate Fe cation.

It belongs to the lipoxygenase family. Monomer. Requires Fe cation as cofactor.

The protein localises to the cytoplasm. It carries out the reaction (9Z,12Z)-octadecadienoate + O2 = (9S)-hydroperoxy-(10E,12Z)-octadecadienoate. It functions in the pathway lipid metabolism; oxylipin biosynthesis. In terms of biological role, plant lipoxygenase may be involved in a number of diverse aspects of plant physiology including growth and development, pest resistance, and senescence or responses to wounding. This lipoxygenase introduces molecular oxygen exclusively into the C-9 position of linoleic and linolenic. This is Linoleate 9S-lipoxygenase 1 from Oryza sativa subsp. japonica (Rice).